The primary structure comprises 464 residues: Argininosuccinate lyase (464 aa).

An N-acetylalanine modification is found at A2. K7 carries the N6-acetyllysine modification. 2-(N(omega)-L-arginino)succinate is bound at residue S27. K69 bears the N6-acetyllysine mark. Positions 114 and 159 each coordinate 2-(N(omega)-L-arginino)succinate. H160 (proton acceptor) is an active-site residue. S281 functions as the Proton donor in the catalytic mechanism. Position 288 is an N6-acetyllysine (K288). 2-(N(omega)-L-arginino)succinate is bound by residues N289, Y321, Q326, and K329.

The protein belongs to the lyase 1 family. Argininosuccinate lyase subfamily. In terms of assembly, homotetramer. Forms tissue-specific complexes with ASS1, SLC7A1, HSP90AA1 and nitric oxide synthase NOS1, NOS2 or NOS3; the complex maintenance is independent of ASL catalytic function. Acetylation modifies enzyme activity in response to alterations of extracellular nutrient availability. Acetylation increased with trichostin A (TSA) or with nicotinamide (NAM). Glucose increases acetylation by about a factor of 3 with decreasing enzyme activity. Acetylation on Lys-288 is decreased on the addition of extra amino acids resulting in activation of enzyme activity.

The enzyme catalyses 2-(N(omega)-L-arginino)succinate = fumarate + L-arginine. Its pathway is amino-acid biosynthesis; L-arginine biosynthesis; L-arginine from L-ornithine and carbamoyl phosphate: step 3/3. It functions in the pathway nitrogen metabolism; urea cycle; L-arginine and fumarate from (N(omega)-L-arginino)succinate: step 1/1. With respect to regulation, enzyme activity is regulated by acetylation. Catalyzes the reversible cleavage of L-argininosuccinate to fumarate and L-arginine, an intermediate step reaction in the urea cycle mostly providing for hepatic nitrogen detoxification into excretable urea as well as de novo L-arginine synthesis in nonhepatic tissues. Essential regulator of intracellular and extracellular L-arginine pools. As part of citrulline-nitric oxide cycle, forms tissue-specific multiprotein complexes with argininosuccinate synthase ASS1, transport protein SLC7A1 and nitric oxide synthase NOS1, NOS2 or NOS3, allowing for cell-autonomous L-arginine synthesis while channeling extracellular L-arginine to nitric oxide synthesis pathway. The polypeptide is Argininosuccinate lyase (ASL) (Macaca fascicularis (Crab-eating macaque)).